A 402-amino-acid polypeptide reads, in one-letter code: 3-dehydroquinate synthase (402 aa).

This sequence belongs to the archaeal-type DHQ synthase family.

The catalysed reaction is 2-amino-2,3,7-trideoxy-D-lyxo-hept-6-ulosonate + NAD(+) + H2O = 3-dehydroquinate + NH4(+) + NADH + H(+). In terms of biological role, catalyzes the oxidative deamination and cyclization of 2-amino-3,7-dideoxy-D-threo-hept-6-ulosonic acid (ADH) to yield 3-dehydroquinate (DHQ), which is fed into the canonical shikimic pathway of aromatic amino acid biosynthesis. In Methanopyrus kandleri (strain AV19 / DSM 6324 / JCM 9639 / NBRC 100938), this protein is 3-dehydroquinate synthase.